Here is a 957-residue protein sequence, read N- to C-terminus: Glycine dehydrogenase (decarboxylating) (957 aa).

Lys708 bears the N6-(pyridoxal phosphate)lysine mark.

It belongs to the GcvP family. The glycine cleavage system is composed of four proteins: P, T, L and H. Requires pyridoxal 5'-phosphate as cofactor.

The enzyme catalyses N(6)-[(R)-lipoyl]-L-lysyl-[glycine-cleavage complex H protein] + glycine + H(+) = N(6)-[(R)-S(8)-aminomethyldihydrolipoyl]-L-lysyl-[glycine-cleavage complex H protein] + CO2. Its function is as follows. The glycine cleavage system catalyzes the degradation of glycine. The P protein binds the alpha-amino group of glycine through its pyridoxal phosphate cofactor; CO(2) is released and the remaining methylamine moiety is then transferred to the lipoamide cofactor of the H protein. In Escherichia coli (strain K12 / MC4100 / BW2952), this protein is Glycine dehydrogenase (decarboxylating).